The sequence spans 92 residues: Small ribosomal subunit protein uS19 (92 aa).

The protein belongs to the universal ribosomal protein uS19 family.

Functionally, protein S19 forms a complex with S13 that binds strongly to the 16S ribosomal RNA. This is Small ribosomal subunit protein uS19 from Novosphingobium aromaticivorans (strain ATCC 700278 / DSM 12444 / CCUG 56034 / CIP 105152 / NBRC 16084 / F199).